The sequence spans 205 residues: Probable thymidylate kinase (205 aa).

ATP is bound at residue 10–17 (GIDGSGKS).

Belongs to the thymidylate kinase family.

The catalysed reaction is dTMP + ATP = dTDP + ADP. This is Probable thymidylate kinase from Methanosarcina barkeri (strain Fusaro / DSM 804).